Here is a 655-residue protein sequence, read N- to C-terminus: Probable replication restart protein PriA (655 aa).

Zn(2+) is bound by residues C368, C371, C377, C380, C396, C399, C408, and C411.

This sequence belongs to the helicase family. PriA subfamily. In terms of assembly, component of the replication restart primosome. The cofactor is Zn(2+).

In terms of biological role, initiates the restart of stalled replication forks, which reloads the replicative helicase on sites other than the origin of replication. Recognizes and binds to abandoned replication forks and remodels them to uncover a helicase loading site. Promotes assembly of the primosome at these replication forks. The chain is Probable replication restart protein PriA from Mycobacterium bovis (strain ATCC BAA-935 / AF2122/97).